Consider the following 351-residue polypeptide: Prohormone-2 (351 aa).

A signal peptide spans 1–21; sequence MMCDWVWLLLTLCSLLMIVQS. Propeptides lie at residues 22–177 and 192–319; these read LPTN…QTQV and ELDI…MISR. Residues 51-69 show a composition bias toward polar residues; sequence GNQQNHQPENNPSSSYSST. 2 disordered regions span residues 51-71 and 136-176; these read GNQQ…STAE and NEDR…VQTQ. The span at 136-145 shows a compositional bias: basic and acidic residues; sequence NEDRRKRSEK. A compositionally biased stretch (low complexity) spans 158–176; it reads PSTTSFQSPTSTQQSVQTQ.

It localises to the secreted. This is Prohormone-2 from Apis mellifera (Honeybee).